The primary structure comprises 212 residues: Protein ERP5 (212 aa).

A signal peptide spans 1-20; sequence MKYNIVHGICLLFAITQAVG. Residues 21 to 178 lie on the Lumenal side of the membrane; sequence AVHFYAKSGE…FRNQSESANS (158 aa). The 94-residue stretch at 31–124 folds into the GOLD domain; the sequence is TKCFYEHLSR…TLRVFIELEI (94 aa). Asparagine 171 is a glycosylation site (N-linked (GlcNAc...) asparagine). A helical transmembrane segment spans residues 179–199; the sequence is KIMTWSVFQLLILLGTCAFQL. Residues 200 to 212 lie on the Cytoplasmic side of the membrane; sequence RYLKNFFVKQKVV.

It belongs to the EMP24/GP25L family.

Its subcellular location is the endoplasmic reticulum membrane. In terms of biological role, involved in vesicular protein trafficking. The protein is Protein ERP5 (ERP5) of Saccharomyces cerevisiae (strain ATCC 204508 / S288c) (Baker's yeast).